Here is a 200-residue protein sequence, read N- to C-terminus: Recombination protein RecR (200 aa).

The segment at 59–74 (CEICGNIDTRSPCTVC) adopts a C4-type zinc-finger fold. The Toprim domain maps to 82–177 (SIIVVVADVA…KVTRLAHGVP (96 aa)).

Belongs to the RecR family.

Functionally, may play a role in DNA repair. It seems to be involved in an RecBC-independent recombinational process of DNA repair. It may act with RecF and RecO. This is Recombination protein RecR from Nitrobacter hamburgensis (strain DSM 10229 / NCIMB 13809 / X14).